The following is a 127-amino-acid chain: Ribonuclease P protein component (127 aa).

The protein belongs to the RnpA family. Consists of a catalytic RNA component (M1 or rnpB) and a protein subunit.

The catalysed reaction is Endonucleolytic cleavage of RNA, removing 5'-extranucleotides from tRNA precursor.. In terms of biological role, RNaseP catalyzes the removal of the 5'-leader sequence from pre-tRNA to produce the mature 5'-terminus. It can also cleave other RNA substrates such as 4.5S RNA. The protein component plays an auxiliary but essential role in vivo by binding to the 5'-leader sequence and broadening the substrate specificity of the ribozyme. The chain is Ribonuclease P protein component from Prochlorococcus marinus (strain SARG / CCMP1375 / SS120).